The primary structure comprises 305 residues: DNA-directed RNA polymerase 35 kDa subunit (305 aa).

It belongs to the poxviridae DNA-directed RNA polymerase 35 kDa subunit family. The DNA-dependent RNA polymerase used for intermediate and late genes expression consists of eight subunits 147 kDa, 133 kDa, 35 kDa, 30 kDa, 22 kDa, 19 kDa, 18 kDa and 7 kDa totalling more than 500 kDa in mass. The same holoenzyme, with the addition of the transcription-specificity factor RAP94, is used for early gene expression.

It localises to the virion. It carries out the reaction RNA(n) + a ribonucleoside 5'-triphosphate = RNA(n+1) + diphosphate. Functionally, part of the DNA-dependent RNA polymerase which catalyzes the transcription of viral DNA into RNA using the four ribonucleoside triphosphates as substrates. Responsible for the transcription of early, intermediate and late genes. DNA-dependent RNA polymerase associates with the early transcription factor (ETF), itself composed of D6 and A7, thereby allowing the early genes transcription. Late transcription, and probably also intermediate transcription, require newly synthesized RNA polymerase. This is DNA-directed RNA polymerase 35 kDa subunit (RPO35) from Homo sapiens (Human).